A 113-amino-acid polypeptide reads, in one-letter code: MNTVRVTFLLVFVLAVSLGQADKDENRMEMQEKTEQGKSYLDFAENLLLQKLEELEAKLPEEDSEESRNSRQKRCIGEGVPCDENDPRCCSGLVCLKPTLHGIWYKSYYCYKK.

Positions 1–21 (MNTVRVTFLLVFVLAVSLGQA) are cleaved as a signal peptide. A propeptide spanning residues 22–74 (DKDENRMEMQEKTEQGKSYLDFAENLLLQKLEELEAKLPEEDSEESRNSRQKR) is cleaved from the precursor. Residues 58 to 69 (KLPEEDSEESRN) are compositionally biased toward basic and acidic residues. Residues 58–82 (KLPEEDSEESRNSRQKRCIGEGVPC) are disordered. Disulfide bonds link Cys75–Cys90, Cys82–Cys95, and Cys89–Cys110.

This sequence belongs to the neurotoxin 14 (magi-1) family. 01 (HNTX-16) subfamily. Expressed by the venom gland.

Its subcellular location is the secreted. In terms of biological role, probable ion channel inhibitor. The polypeptide is U11-theraphotoxin-Hhn1a (Cyriopagopus hainanus (Chinese bird spider)).